Reading from the N-terminus, the 2605-residue chain is Protein ABERRANT POLLEN TRANSMISSION 1 (2605 aa).

Residues 1–43 (MMLGLVQLLVGFVVAWEAVELVLRHGLLLSVFKLAILAALAAA) form the signal peptide. The tract at residues 137–158 (STNKKKPAPRKPISTTTAKAKG) is disordered. Residues Asn-232, Asn-320, Asn-348, Asn-516, Asn-587, Asn-628, Asn-696, Asn-779, Asn-1171, Asn-1318, and Asn-1459 are each glycosylated (N-linked (GlcNAc...) asparagine). The segment at 305-326 (SASTVAEQKDEPSVDNKSAARS) is disordered. Basic and acidic residues predominate over residues 311-326 (EQKDEPSVDNKSAARS). A disordered region spans residues 1761–1818 (MSKDGALSSVSSTSQPSEPQQIKSSESPPSNGSGKPDLTSSSENALKRSNNSDSEEEG). Over residues 1768–1781 (SSVSSTSQPSEPQQ) the composition is skewed to low complexity. Residues 1782–1812 (IKSSESPPSNGSGKPDLTSSSENALKRSNNS) show a composition bias toward polar residues. 5 N-linked (GlcNAc...) asparagine glycosylation sites follow: Asn-1791, Asn-1810, Asn-2003, Asn-2280, and Asn-2291. Disordered regions lie at residues 2269–2312 (VSTT…SSFD) and 2332–2361 (EGQT…REDK). The segment covering 2281–2300 (TSVAETNSPNNQSSKETTFA) has biased composition (polar residues). Basic and acidic residues-rich tracts occupy residues 2303–2312 (PELRRTSSFD) and 2343–2361 (DAAK…REDK). Residues Asn-2468 and Asn-2564 are each glycosylated (N-linked (GlcNAc...) asparagine). The disordered stretch occupies residues 2574 to 2605 (TELEVAELPPRAPGYNTDSSSDSSSAETSPKD).

Belongs to the SABRE family. As to expression, mature pollen-specific.

It is found in the secreted. The protein localises to the golgi apparatus. Functionally, may be involved in membrane trafficking. Required for tip growth in pollen tubes and root hairs. This Zea mays (Maize) protein is Protein ABERRANT POLLEN TRANSMISSION 1.